A 91-amino-acid polypeptide reads, in one-letter code: Probable Fe(2+)-trafficking protein (91 aa).

Belongs to the Fe(2+)-trafficking protein family.

Its function is as follows. Could be a mediator in iron transactions between iron acquisition and iron-requiring processes, such as synthesis and/or repair of Fe-S clusters in biosynthetic enzymes. This Shewanella denitrificans (strain OS217 / ATCC BAA-1090 / DSM 15013) protein is Probable Fe(2+)-trafficking protein.